Reading from the N-terminus, the 693-residue chain is Translation factor GUF1 homolog, mitochondrial (693 aa).

The span at 51–63 (SSSSTEKPTTSGT) shows a compositional bias: polar residues. The segment at 51–78 (SSSSTEKPTTSGTINGGGGKQKAASQPK) is disordered. A tr-type G domain is found at 88–270 (QKIRNFSIIA…RIVQMVPPPP (183 aa)). Residues 97 to 104 (AHIDHGKS), 163 to 167 (DTPGH), and 217 to 220 (NKID) each bind GTP.

This sequence belongs to the TRAFAC class translation factor GTPase superfamily. Classic translation factor GTPase family. LepA subfamily.

It is found in the mitochondrion inner membrane. The catalysed reaction is GTP + H2O = GDP + phosphate + H(+). Functionally, promotes mitochondrial protein synthesis. May act as a fidelity factor of the translation reaction, by catalyzing a one-codon backward translocation of tRNAs on improperly translocated ribosomes. Binds to mitochondrial ribosomes in a GTP-dependent manner. In Phaeodactylum tricornutum (strain CCAP 1055/1), this protein is Translation factor GUF1 homolog, mitochondrial.